A 154-amino-acid chain; its full sequence is MILMRRREDVMPVCELRHATTEDTDSVYALICELLKNELDYQAFRDGFAANLLDPNVHYRLALRNGEVVGMISLHMQFHLHHANWIGEIQELVVLPPMRGQKIGSQLLAWAEEEARQAGAELTELSTNIKRRDAHRFYLREGYKQSHFRFTKAL.

Residues cysteine 14–leucine 154 enclose the N-acetyltransferase domain.

In terms of assembly, homodimer. Requires a divalent metal cation as cofactor.

It carries out the reaction aminomethylphosphonate + acetyl-CoA = 2-N-acetamidomethylphosphonate + CoA. It catalyses the reaction (S)-1-aminoethylphosphonate + acetyl-CoA = [(1S)-1-acetamidoethyl]phosphonate + CoA. Functionally, aminoalkylphosphonate N-acetyltransferase which is able to acetylate a range of aminoalkylphosphonic acids, including (S)-1-aminoethylphosphonate ((S)-1AEP) and 2-aminoethylphosphonate, using acetyl-CoA as acetyl donor. Its physiological role in S.typhimurium is unclear. However, by acetylating (S)-1AEP, PhnO would protect against the deleterious effects of (S)-1AEP, a structural analog of D-alanine that has antibacterial properties. This is Aminoalkylphosphonate N-acetyltransferase from Salmonella typhimurium (strain LT2 / SGSC1412 / ATCC 700720).